The primary structure comprises 575 residues: Cytoskeleton-associated protein 4 (575 aa).

The segment at 1–73 (MPSAKQRGSK…RGRSSAATAN (73 aa)) is disordered. Residues 1–85 (MPSAKQRGSK…SASCSRRLGR (85 aa)) are Cytoplasmic-facing. Residues Ser-3, Ser-17, and Ser-19 each carry the phosphoserine modification. At Lys-21 the chain carries N6-acetyllysine. A compositionally biased stretch (pro residues) spans 37 to 53 (PAAPQQPQPPAPHPPQH). Cys-79 carries the S-palmitoyl cysteine; by ZDHHC2 lipid modification. Residues 86 to 108 (VLNFLFYLSLVAAAAFSGWYVHH) traverse the membrane as a helical segment. The Extracellular segment spans residues 109–575 (VLEEVQQVRR…LKVEKIHEKI (467 aa)). A coiled-coil region spans residues 125 to 193 (RQRDELGQGL…QKLQNEILKD (69 aa)). Phosphoserine is present on residues Ser-211, Ser-292, and Ser-367. Coiled-coil stretches lie at residues 236–438 (DVQK…VGNL) and 507–575 (SSLD…HEKI).

As to quaternary structure, interacts with REEP5. Reversibly palmitoylated. Palmitoylation at Cys-79 by DHHC2 is required for its trafficking from the ER to the plasma membrane and for its perinuclear localization. In terms of processing, increased phosphorylation during mitosis prevents binding to microtubules. Expressed in cardiomyocytes (at protein level).

Its subcellular location is the endoplasmic reticulum membrane. It localises to the cell membrane. The protein localises to the cytoplasm. The protein resides in the cytoskeleton. It is found in the perinuclear region. Its function is as follows. High-affinity epithelial cell surface receptor for APF. In terms of biological role, mediates the anchoring of the endoplasmic reticulum to microtubules. This Mus musculus (Mouse) protein is Cytoskeleton-associated protein 4 (Ckap4).